A 702-amino-acid chain; its full sequence is Ribosomal RNA large subunit methyltransferase K/L (702 aa).

Residues 43 to 154 form the THUMP domain; it reads LIYQSLMWSR…KETASIALDL (112 aa).

The protein belongs to the methyltransferase superfamily. RlmKL family.

The protein localises to the cytoplasm. It carries out the reaction guanosine(2445) in 23S rRNA + S-adenosyl-L-methionine = N(2)-methylguanosine(2445) in 23S rRNA + S-adenosyl-L-homocysteine + H(+). It catalyses the reaction guanosine(2069) in 23S rRNA + S-adenosyl-L-methionine = N(2)-methylguanosine(2069) in 23S rRNA + S-adenosyl-L-homocysteine + H(+). Functionally, specifically methylates the guanine in position 2445 (m2G2445) and the guanine in position 2069 (m7G2069) of 23S rRNA. The chain is Ribosomal RNA large subunit methyltransferase K/L from Salmonella schwarzengrund (strain CVM19633).